Consider the following 259-residue polypeptide: Phosphatidylserine decarboxylase proenzyme (259 aa).

Catalysis depends on charge relay system; for autoendoproteolytic cleavage activity residues Asp86, His142, and Ser226. Catalysis depends on Ser226, which acts as the Schiff-base intermediate with substrate; via pyruvic acid; for decarboxylase activity. Position 226 is a pyruvic acid (Ser); by autocatalysis (Ser226).

It belongs to the phosphatidylserine decarboxylase family. PSD-B subfamily. Prokaryotic type I sub-subfamily. As to quaternary structure, heterodimer of a large membrane-associated beta subunit and a small pyruvoyl-containing alpha subunit. Pyruvate is required as a cofactor. Post-translationally, is synthesized initially as an inactive proenzyme. Formation of the active enzyme involves a self-maturation process in which the active site pyruvoyl group is generated from an internal serine residue via an autocatalytic post-translational modification. Two non-identical subunits are generated from the proenzyme in this reaction, and the pyruvate is formed at the N-terminus of the alpha chain, which is derived from the carboxyl end of the proenzyme. The autoendoproteolytic cleavage occurs by a canonical serine protease mechanism, in which the side chain hydroxyl group of the serine supplies its oxygen atom to form the C-terminus of the beta chain, while the remainder of the serine residue undergoes an oxidative deamination to produce ammonia and the pyruvoyl prosthetic group on the alpha chain. During this reaction, the Ser that is part of the protease active site of the proenzyme becomes the pyruvoyl prosthetic group, which constitutes an essential element of the active site of the mature decarboxylase.

It is found in the cell membrane. The enzyme catalyses a 1,2-diacyl-sn-glycero-3-phospho-L-serine + H(+) = a 1,2-diacyl-sn-glycero-3-phosphoethanolamine + CO2. It participates in phospholipid metabolism; phosphatidylethanolamine biosynthesis; phosphatidylethanolamine from CDP-diacylglycerol: step 2/2. In terms of biological role, catalyzes the formation of phosphatidylethanolamine (PtdEtn) from phosphatidylserine (PtdSer). The polypeptide is Phosphatidylserine decarboxylase proenzyme (Geobacillus sp. (strain WCH70)).